The sequence spans 210 residues: Acetoin utilization protein AcuA (210 aa).

Positions 19 to 189 constitute an N-acetyltransferase domain; the sequence is VLIEGPISPE…ANCLMARIGK (171 aa).

This sequence belongs to the acetyltransferase family. In terms of assembly, monomer.

Its pathway is ketone degradation; acetoin degradation. Part of the acuABC operon, which is possibly involved in the breakdown of acetoin and butanediol. Acts as an acetyltransferase inactivating acetyl-CoA synthetase AcsA via acetylation at a Lys residue. The chain is Acetoin utilization protein AcuA from Bacillus licheniformis (strain ATCC 14580 / DSM 13 / JCM 2505 / CCUG 7422 / NBRC 12200 / NCIMB 9375 / NCTC 10341 / NRRL NRS-1264 / Gibson 46).